The primary structure comprises 192 residues: Pyridoxal 5'-phosphate synthase subunit PdxT (192 aa).

53 to 55 (GES) is a binding site for L-glutamine. Residue cysteine 82 is the Nucleophile of the active site. L-glutamine is bound by residues arginine 108 and 134–135 (IR). Active-site charge relay system residues include histidine 170 and glutamate 172.

This sequence belongs to the glutaminase PdxT/SNO family. As to quaternary structure, in the presence of PdxS, forms a dodecamer of heterodimers. Only shows activity in the heterodimer.

The enzyme catalyses aldehydo-D-ribose 5-phosphate + D-glyceraldehyde 3-phosphate + L-glutamine = pyridoxal 5'-phosphate + L-glutamate + phosphate + 3 H2O + H(+). It catalyses the reaction L-glutamine + H2O = L-glutamate + NH4(+). It functions in the pathway cofactor biosynthesis; pyridoxal 5'-phosphate biosynthesis. Functionally, catalyzes the hydrolysis of glutamine to glutamate and ammonia as part of the biosynthesis of pyridoxal 5'-phosphate. The resulting ammonia molecule is channeled to the active site of PdxS. This is Pyridoxal 5'-phosphate synthase subunit PdxT from Methanothermobacter thermautotrophicus (strain ATCC 29096 / DSM 1053 / JCM 10044 / NBRC 100330 / Delta H) (Methanobacterium thermoautotrophicum).